A 392-amino-acid chain; its full sequence is Heat-inducible transcription repressor HrcA (392 aa).

It belongs to the HrcA family.

Negative regulator of class I heat shock genes (grpE-dnaK-dnaJ and groELS operons). Prevents heat-shock induction of these operons. The sequence is that of Heat-inducible transcription repressor HrcA from Chlamydia muridarum (strain MoPn / Nigg).